A 231-amino-acid polypeptide reads, in one-letter code: Flagellar L-ring protein (231 aa).

The signal sequence occupies residues Met1 to Gly18. Residue Cys19 is the site of N-palmitoyl cysteine attachment. The S-diacylglycerol cysteine moiety is linked to residue Cys19.

It belongs to the FlgH family. The basal body constitutes a major portion of the flagellar organelle and consists of four rings (L,P,S, and M) mounted on a central rod.

It localises to the cell outer membrane. Its subcellular location is the bacterial flagellum basal body. In terms of biological role, assembles around the rod to form the L-ring and probably protects the motor/basal body from shearing forces during rotation. This is Flagellar L-ring protein from Pseudomonas fluorescens (strain ATCC BAA-477 / NRRL B-23932 / Pf-5).